The following is a 447-amino-acid chain: Crotonyl-CoA reductase (447 aa).

Belongs to the zinc-containing alcohol dehydrogenase family. Crotonyl-CoA carboxylase/reductase subfamily. Homodimer.

The catalysed reaction is butanoyl-CoA + NADP(+) = (2E)-butenoyl-CoA + NADPH + H(+). With respect to regulation, inhibited by divalent cations (30-100%), beta-chloromercuribenzoate (85%), iodoacetamide (40%) and N-ethylmaleamide (80%). The presence of CoA thioesters containing 12-20 carbon atoms results in inhibition of enzyme activity. The greatest degree of inhibition is observed in the presence of palmitoyl-CoA and myristoyl-CoA. The branched-chain fatty acids, isopalmitoyl-CoA and isomyristoyl-CoA are less effective inhibitors of the crotonyl-CoA reductase. Concentrations of NADPH above 200 uM lead to inhibition of enzyme activity. Its function is as follows. May play a role in supplying butyryl-CoA for straight-chain fatty acid biosynthesis. Catalyzes the conversion of crotonyl-CoA to butyryl-CoA. It shows a high substrate specificity for crotonyl-CoA, a short-chain-length (C4), but no measurable activity is observed with shorter (C3) or longer-chain-length enoyl-CoA thioesters. This chain is Crotonyl-CoA reductase (ccr), found in Streptomyces collinus.